Reading from the N-terminus, the 800-residue chain is Receptor-like protein 47 (800 aa).

The first 31 residues, 1-31, serve as a signal peptide directing secretion; it reads MMHSSSVRRMITVKWSLCLIFCLTNSILVSA. The Extracellular portion of the chain corresponds to 32–759; it reads KHLCLPDQKD…QDEDKEEEDQ (728 aa). 2 N-linked (GlcNAc...) asparagine glycosylation sites follow: asparagine 66 and asparagine 102. 23 LRR repeats span residues 109-131, 133-156, 157-179, 190-213, 214-238, 240-262, 263-288, 294-311, 312-334, 335-358, 360-383, 385-406, 407-430, 431-453, 455-477, 479-500, 502-523, 524-550, 551-574, 621-645, 646-669, 670-693, and 695-718; these read QHLQKLVLGSNHLSGILPDSIGN, KRLKVLVLVNCNLFGKIPSSLGNL, SYLTHLDLSYNDFTSEGPDSMGN, LSSVTWIDLGDNQLKGMLPSNMSS, LSKLEAFDISGNSFSGTIPSSLFMI, SLILLHLGRNDFSGPFEIGNISS, PSNLQLLNIGRNNFNPDIVDLSIFSP, YLDVSGINLKISSTVSLP, SPIEYLGLLSCNISEFPKFLRNQ, TSLEYLDISANQIEGQVPEWLWSL, ELRYVNISHNSFNGFEGPADVIQG, RELLVLDISSNIFQDPFPLLPV, VSMNYLFSSNNRFSGEIPKTICEL, DNLRILVLSNNNFSGSIPRCFEN, HLYVLHLRNNNLSGIFPEEAISH, LQSFDVGHNLFSGELPKSLINC, DIEFLNVEDNRINDTFPSWLEL, LPNLQILVLRSNEFYGPIFSPGDSLSF, SRLRIFDISENRFTGVLPSDYFVG, FTIYKTIDVSGNRLEGDIPESIGLL, KEVIVLSMSNNAFTGHIPPSLSNL, SNLQSLDLSQNRLSGSIPGELGKL, and FLEWMNFSHNRLEGPIPETTQIQT. Asparagine 155 carries an N-linked (GlcNAc...) asparagine glycan. N-linked (GlcNAc...) asparagine glycosylation is present at asparagine 210. N-linked (GlcNAc...) asparagine glycosylation is present at asparagine 259. N-linked (GlcNAc...) asparagine glycosylation is found at asparagine 323 and asparagine 333. A glycan (N-linked (GlcNAc...) asparagine) is linked at asparagine 365. N-linked (GlcNAc...) asparagine glycans are attached at residues asparagine 442, asparagine 465, asparagine 499, and asparagine 514. Residue asparagine 668 is glycosylated (N-linked (GlcNAc...) asparagine). Asparagine 700 is a glycosylation site (N-linked (GlcNAc...) asparagine). A helical membrane pass occupies residues 760 to 780; that stretch reads VFSWIAAAIGYVPGVVCGLTI. The Cytoplasmic portion of the chain corresponds to 781 to 800; it reads GHILVSHKRDWFMRIVSFFT.

It belongs to the RLP family.

It localises to the cell membrane. The chain is Receptor-like protein 47 from Arabidopsis thaliana (Mouse-ear cress).